We begin with the raw amino-acid sequence, 37 residues long: Mau operon transcriptional activator (37 aa).

The protein belongs to the LysR transcriptional regulatory family.

Functionally, transcriptional activator of the mau genes involved in methylamine metabolism. The chain is Mau operon transcriptional activator (mauR) from Paracoccus versutus (Thiobacillus versutus).